We begin with the raw amino-acid sequence, 189 residues long: Elongation factor P (189 aa).

Lysine 34 is subject to N6-(3,6-diaminohexanoyl)-5-hydroxylysine.

Belongs to the elongation factor P family. May be beta-lysylated on the epsilon-amino group of Lys-34 by the combined action of EpmA and EpmB, and then hydroxylated on the C5 position of the same residue by EpmC (if this protein is present). Lysylation is critical for the stimulatory effect of EF-P on peptide-bond formation. The lysylation moiety may extend toward the peptidyltransferase center and stabilize the terminal 3-CCA end of the tRNA. Hydroxylation of the C5 position on Lys-34 may allow additional potential stabilizing hydrogen-bond interactions with the P-tRNA.

It is found in the cytoplasm. It participates in protein biosynthesis; polypeptide chain elongation. Its function is as follows. Involved in peptide bond synthesis. Alleviates ribosome stalling that occurs when 3 or more consecutive Pro residues or the sequence PPG is present in a protein, possibly by augmenting the peptidyl transferase activity of the ribosome. Modification of Lys-34 is required for alleviation. This Francisella philomiragia subsp. philomiragia (strain ATCC 25017 / CCUG 19701 / FSC 153 / O#319-036) protein is Elongation factor P.